Here is a 654-residue protein sequence, read N- to C-terminus: MLAWLRHRIRSYNTSTYSSILPSASFGKVYKIGTKLNFTLLALCLLLACSVFFNYFYLADNNGLDIDTKGEEEENVFKDRKMVIFPNNFEITDKNLLEYYLKTLEEPLHPQDTIYRNRFIYKVPDVSYTSQTINLFSGLSQNSQSSKCEDLSSSYSFDVSGPQNKNCDLYKVLGKFLNDDSEYFQEISPLFPKLKEMLVKKEIEKHWFQLIGSSVWLEQYGVHLMTSRIFYSSTGDKVKPVVSLTYVQVFDHEWREIENVELIVPDGEGKYKPMTYPTFLPMSVYHNEKQQQGRFYGVEDPRITLVRNKLGYDEPIIVYNSHHRKITDAKSDNDGESNIHFKAYRSIFMAWLWQNQKGKNNVEEIETGKMKNRVYVKSKELIKPNNKREDKEKNWAPFINYQQRLQQGFDSHVYFMYQFQDLKILKCSLLDEEDCVWEYQFNDKNGAGRLRGGTELVNINQLLTTFDHPEIKRVKDLMPQNREIWIGVARAALEKCGCGDKMYRPNIVILIKDGDDQYRLSHVSPFVGLGIPILPWWPDKGLCDGKNLIIPNGISSWHLNKDEDNSVQDYLTLSISRADSTVDLLHIKGLLKSILFDDPNSKLLELNDYGFNNKNIECAVKSSDAFCKKYGSEYKLNNNKEEDKANGNGKGSSS.

Residues 1–37 lie on the Cytoplasmic side of the membrane; the sequence is MLAWLRHRIRSYNTSTYSSILPSASFGKVYKIGTKLN. Residues 38-58 traverse the membrane as a helical segment; it reads FTLLALCLLLACSVFFNYFYL. The Extracellular segment spans residues 59–654; it reads ADNNGLDIDT…ANGNGKGSSS (596 aa).

The protein belongs to the BMT family.

It localises to the membrane. Its function is as follows. Beta-mannosyltransferase involved in cell wall biosynthesis. Required for the addition of beta-mannose to the acid-labile fraction of cell wall phosphopeptidomannan. The polypeptide is Beta-mannosyltransferase 2 (RHD1) (Candida albicans (strain SC5314 / ATCC MYA-2876) (Yeast)).